The following is a 162-amino-acid chain: ATP synthase subunit b 1 (162 aa).

Residues 3-23 (FLDATFFAFVGLVLFLALVVY) traverse the membrane as a helical segment.

Belongs to the ATPase B chain family. As to quaternary structure, F-type ATPases have 2 components, F(1) - the catalytic core - and F(0) - the membrane proton channel. F(1) has five subunits: alpha(3), beta(3), gamma(1), delta(1), epsilon(1). F(0) has three main subunits: a(1), b(2) and c(10-14). The alpha and beta chains form an alternating ring which encloses part of the gamma chain. F(1) is attached to F(0) by a central stalk formed by the gamma and epsilon chains, while a peripheral stalk is formed by the delta and b chains.

Its subcellular location is the cell inner membrane. Its function is as follows. F(1)F(0) ATP synthase produces ATP from ADP in the presence of a proton or sodium gradient. F-type ATPases consist of two structural domains, F(1) containing the extramembraneous catalytic core and F(0) containing the membrane proton channel, linked together by a central stalk and a peripheral stalk. During catalysis, ATP synthesis in the catalytic domain of F(1) is coupled via a rotary mechanism of the central stalk subunits to proton translocation. Component of the F(0) channel, it forms part of the peripheral stalk, linking F(1) to F(0). The chain is ATP synthase subunit b 1 from Rhizobium johnstonii (strain DSM 114642 / LMG 32736 / 3841) (Rhizobium leguminosarum bv. viciae).